A 342-amino-acid polypeptide reads, in one-letter code: MTKSLFRQSFLFDSLDLDHPMVAQTVRTEQGVTLKLHQRGVLEVIPAQTDAATKNMVISCGVHGDETAPMELLDKWIDDIVSGFQPVAERCLFILAHPQATVRHVRFIEQNLNRLFDDKPHTPSTELAIADNLKVLLKQFFANTDEHSRWHLDLHCAIRGSKHYSFAVSPKARHPVRSRSLMQFIEQAHIEAVMLSNAPSSTFSWYSAEHYAAQALTLELGQVARLGENLLDRLLAFDLAMRDLISRHKPEHLPRKSVMYRVSRTIVRLHDDFDFRFSDDVENFTAFMHGEVFGHDGDKPLMAKNEGEAIVFPNRKVAIGQRAALMVCKVNTRYEDDQLVYD.

His-63, Glu-66, and His-155 together coordinate Zn(2+). Residue Glu-219 is part of the active site.

It belongs to the AspA/AstE family. Succinylglutamate desuccinylase subfamily. The cofactor is Zn(2+).

The catalysed reaction is N-succinyl-L-glutamate + H2O = L-glutamate + succinate. Its pathway is amino-acid degradation; L-arginine degradation via AST pathway; L-glutamate and succinate from L-arginine: step 5/5. Its function is as follows. Transforms N(2)-succinylglutamate into succinate and glutamate. In Vibrio cholerae serotype O1 (strain ATCC 39541 / Classical Ogawa 395 / O395), this protein is Succinylglutamate desuccinylase.